Consider the following 289-residue polypeptide: Serine/threonine-protein phosphatase Pgam5, mitochondrial (289 aa).

Residues 7–23 traverse the membrane as a helical segment; that stretch reads FVCGTGAGLAAYYLQRL.

Belongs to the phosphoglycerate mutase family. BPG-dependent PGAM subfamily. As to quaternary structure, interacts with Pk92B/ASK1.

It localises to the mitochondrion outer membrane. The catalysed reaction is O-phospho-L-seryl-[protein] + H2O = L-seryl-[protein] + phosphate. The enzyme catalyses O-phospho-L-threonyl-[protein] + H2O = L-threonyl-[protein] + phosphate. Its function is as follows. Displays phosphatase activity for serine/threonine residues, and dephosphorylates and activates Pk92B kinase. Has apparently no phosphoglycerate mutase activity. The polypeptide is Serine/threonine-protein phosphatase Pgam5, mitochondrial (Pgam5) (Drosophila melanogaster (Fruit fly)).